A 110-amino-acid polypeptide reads, in one-letter code: Keratin-associated protein 6-3 (110 aa).

It belongs to the KRTAP type 6 family. As to quaternary structure, interacts with hair keratins.

In terms of biological role, in the hair cortex, hair keratin intermediate filaments are embedded in an interfilamentous matrix, consisting of hair keratin-associated proteins (KRTAP), which are essential for the formation of a rigid and resistant hair shaft through their extensive disulfide bond cross-linking with abundant cysteine residues of hair keratins. The matrix proteins include the high-sulfur and high-glycine-tyrosine keratins. The polypeptide is Keratin-associated protein 6-3 (Homo sapiens (Human)).